Consider the following 219-residue polypeptide: Ribose-5-phosphate isomerase A (219 aa).

Substrate contacts are provided by residues 28 to 31, 81 to 84, and 94 to 97; these read SGST, DGAD, and KGGG. Glu-103 (proton acceptor) is an active-site residue. Lys-121 serves as a coordination point for substrate.

It belongs to the ribose 5-phosphate isomerase family. Homodimer.

The enzyme catalyses aldehydo-D-ribose 5-phosphate = D-ribulose 5-phosphate. It participates in carbohydrate degradation; pentose phosphate pathway; D-ribose 5-phosphate from D-ribulose 5-phosphate (non-oxidative stage): step 1/1. In terms of biological role, catalyzes the reversible conversion of ribose-5-phosphate to ribulose 5-phosphate. This is Ribose-5-phosphate isomerase A from Haemophilus influenzae (strain PittEE).